A 379-amino-acid chain; its full sequence is Chaperone protein DnaJ (379 aa).

The J domain occupies 5-69; that stretch reads EYYERLGVDK…QKRAAYDQYG (65 aa). A CR-type zinc finger spans residues 141-223; it reads GVEKQVKYNR…CHGSGHEKVA (83 aa). Positions 154, 157, 171, 174, 197, 200, 211, and 214 each coordinate Zn(2+). CXXCXGXG motif repeat units follow at residues 154–161, 171–178, 197–204, and 211–218; these read CHTCDGSG, CHKCGGRG, CDVCHGTG, and CTTCHGSG.

The protein belongs to the DnaJ family. As to quaternary structure, homodimer. Zn(2+) serves as cofactor.

It localises to the cytoplasm. Its function is as follows. Participates actively in the response to hyperosmotic and heat shock by preventing the aggregation of stress-denatured proteins and by disaggregating proteins, also in an autonomous, DnaK-independent fashion. Unfolded proteins bind initially to DnaJ; upon interaction with the DnaJ-bound protein, DnaK hydrolyzes its bound ATP, resulting in the formation of a stable complex. GrpE releases ADP from DnaK; ATP binding to DnaK triggers the release of the substrate protein, thus completing the reaction cycle. Several rounds of ATP-dependent interactions between DnaJ, DnaK and GrpE are required for fully efficient folding. Also involved, together with DnaK and GrpE, in the DNA replication of plasmids through activation of initiation proteins. The protein is Chaperone protein DnaJ of Lactococcus lactis subsp. cremoris (strain SK11).